Consider the following 627-residue polypeptide: Sodium- and chloride-dependent GABA transporter 3 (627 aa).

The interval Met1–Glu36 is disordered. At Met1 to Glu53 the chain is on the cytoplasmic side. Ser21 carries the post-translational modification Phosphoserine. A compositionally biased stretch (gly residues) spans Ala23 to Ala32. The next 3 helical transmembrane spans lie at Phe54–Leu74, Ala82–Leu101, and Gly126–Leu146. Residues Ala147–Arg220 are Extracellular-facing. Asn182, Asn185, and Asn193 each carry an N-linked (GlcNAc...) asparagine glycan. The next 9 helical transmembrane spans lie at Trp221–Trp239, Val248–Ile265, Ile301–Tyr318, Ile330–Leu351, Met384–Leu403, Leu433–Thr451, Gly468–Ser488, Trp509–Val528, and Ile548–Ile566. The Cytoplasmic segment spans residues Lys567–Phe627.

Belongs to the sodium:neurotransmitter symporter (SNF) (TC 2.A.22) family. SLC6A11 subfamily. Brain and retina. Expressed predominantly within neurons. Expressed in the hippocampus (at protein level).

Its subcellular location is the cell membrane. It carries out the reaction 4-aminobutanoate(out) + chloride(out) + 2 Na(+)(out) = 4-aminobutanoate(in) + chloride(in) + 2 Na(+)(in). It catalyses the reaction taurine(out) + chloride(out) + 2 Na(+)(out) = taurine(in) + chloride(in) + 2 Na(+)(in). The enzyme catalyses beta-alanine(out) + chloride(out) + 2 Na(+)(out) = beta-alanine(in) + chloride(in) + 2 Na(+)(in). The catalysed reaction is hypotaurine(out) + chloride(out) + 2 Na(+)(out) = hypotaurine(in) + chloride(in) + 2 Na(+)(in). Its activity is regulated as follows. GABA transport is inhibited by beta-alanine. Its function is as follows. Mediates sodium- and chloride-dependent transport of gamma-aminobutyric acid (GABA). Can also mediate transport of beta-alanine and to a lower extent that of taurine and hypotaurine. The polypeptide is Sodium- and chloride-dependent GABA transporter 3 (Slc6a11) (Rattus norvegicus (Rat)).